The sequence spans 342 residues: Phomopsin biosynthesis cluster protein B (342 aa).

The tract at residues 1 to 22 (MESIAKAKSLPNKGRTYDSQRP) is disordered. A helical transmembrane segment spans residues 87–107 (VLIIGCAVISLFAIIGALGFA). The interval 118–186 (CASPAHQNPH…QCGESPDEAQ (69 aa)) is disordered. The span at 144–155 (HSGSHSSSSSTN) shows a compositional bias: low complexity. N-linked (GlcNAc...) asparagine glycosylation occurs at N248.

The protein localises to the membrane. Its function is as follows. Part of the gene cluster that mediates the biosynthesis of the phomopsins, a group of hexapeptide mycotoxins which infects lupins and causes lupinosis disease in livestock. The role of phomB within the phomopsins biosynthesis pathway has still to be determined. The pathway starts with the processing of the precursor phomA by several endopeptidases including kexin proteases as well as the cluster-specific S41 family peptidase phomP1 and the oligopeptidase phomG to produce 10 identical copies of the hexapeptide Tyr-Val-Ile-Pro-Ile-Asp. After being excised from the precursor peptide, the core peptides are cyclized and modified post-translationally by enzymes encoded within the gene cluster. The timing and order of proteolysis of the phomA precursor and PTMs are still unknown. Two tyrosinase-like enzymes, phomQ1 and phomQ2, catalyze the chlorination and hydroxylation of Tyr, respectively. PhomYb, is proposed to be involved in the construction of the macrocyclic structure. The other 4 ustYa family proteins may be involved in PTMs that generate the unique structure of phomopsin A. PhomYa is required for the hydroxylation of C-beta of Tyr. PhomYc, phomYd, and phomYe are responsible for the biosynthesis of 2,3-dehydroisoleucine (dIle), 2,3-dehydroaspartic acid (dAsp), and 3,4-dehydroproline (dPro), respectively. While dIle formation by phomYc is indispensable for the installation of dAsp by phomYd, the order of the other PTMs have not been elucidated yet. Most of the biosynthetic enzymes likely have broad substrate specificity, and thus, there might be a metabolic grid from a precursor to phomopsin A. The enzyme(s) responsible for the biosynthesis of 3,4-dehydrovaline (dVal) have also not been identified yet. Finally, phomM acts as an S-adenosylmethionine-dependent alpha-N-methyltransferase that catalyzes two successive N-methylation reactions, converting N-desmethyl-phomopsin A to phomopsin A and phomopsin A further to an N,N-dimethylated congener called phomopsin E. The chain is Phomopsin biosynthesis cluster protein B from Diaporthe leptostromiformis (Lupinosis disease fungus).